Consider the following 398-residue polypeptide: Phosphoglycerate kinase (398 aa).

Substrate-binding positions include aspartate 21–asparagine 23, arginine 36, histidine 59–arginine 62, arginine 119, and arginine 157. Residues lysine 208, glycine 296, glutamate 327, and glycine 354–serine 357 contribute to the ATP site.

The protein belongs to the phosphoglycerate kinase family. Monomer.

The protein localises to the cytoplasm. The enzyme catalyses (2R)-3-phosphoglycerate + ATP = (2R)-3-phospho-glyceroyl phosphate + ADP. Its pathway is carbohydrate degradation; glycolysis; pyruvate from D-glyceraldehyde 3-phosphate: step 2/5. In Streptococcus pyogenes serotype M3 (strain ATCC BAA-595 / MGAS315), this protein is Phosphoglycerate kinase.